The following is a 407-amino-acid chain: Imidazolonepropionase (407 aa).

2 residues coordinate Fe(3+): histidine 74 and histidine 76. Zn(2+)-binding residues include histidine 74 and histidine 76. 4-imidazolone-5-propanoate contacts are provided by arginine 83, tyrosine 146, and histidine 179. Tyrosine 146 is a binding site for N-formimidoyl-L-glutamate. Histidine 244 is a binding site for Fe(3+). Histidine 244 lines the Zn(2+) pocket. Position 247 (glutamine 247) interacts with 4-imidazolone-5-propanoate. Aspartate 319 lines the Fe(3+) pocket. Zn(2+) is bound at residue aspartate 319. Residues asparagine 321 and glycine 323 each contribute to the N-formimidoyl-L-glutamate site. Threonine 324 is a binding site for 4-imidazolone-5-propanoate.

This sequence belongs to the metallo-dependent hydrolases superfamily. HutI family. It depends on Zn(2+) as a cofactor. Fe(3+) serves as cofactor.

The protein localises to the cytoplasm. It carries out the reaction 4-imidazolone-5-propanoate + H2O = N-formimidoyl-L-glutamate. It participates in amino-acid degradation; L-histidine degradation into L-glutamate; N-formimidoyl-L-glutamate from L-histidine: step 3/3. Its function is as follows. Catalyzes the hydrolytic cleavage of the carbon-nitrogen bond in imidazolone-5-propanoate to yield N-formimidoyl-L-glutamate. It is the third step in the universal histidine degradation pathway. The protein is Imidazolonepropionase of Salmonella enteritidis PT4 (strain P125109).